Reading from the N-terminus, the 123-residue chain is Protein TraJ (123 aa).

Monomer.

It is found in the cytoplasm. Functionally, transfer of plasmid RP4 during bacterial conjugation requires the plasmid-encoded TraJ protein, which binds to a 19-base pair invert sequence repetition within the transfer origin. TraJ protein is bound to only one side of the DNA helix. This nucleoprotein structure is the initial complex in the pathway to assemble a functional relaxosome. The protein is Protein TraJ (traJ) of Escherichia coli.